Reading from the N-terminus, the 190-residue chain is RNA-binding protein OPG065 (190 aa).

The Z-binding domain maps to 5–70; sequence YIDERSNAEI…DIPPRWFMTT (66 aa). Positions 117 to 184 constitute a DRBM domain; sequence NPVTVINEYC…AKLAVDKLLG (68 aa).

Belongs to the orthopoxvirus OPG065 family. In terms of assembly, interacts with host G1P2/ISG15. Interacts with host EIF2AK2/PKR. Interacts with host ZBP1.

In terms of biological role, RNA-binding protein that plays a role in the inhibition of multiple cellular antiviral responses activated by double-stranded RNA (dsRNA), such as inhibition of PKR activation, necroptosis, and IFN-mediated antiviral activities. Recognizes and binds Z-RNA structures via its Z-binding domain and dsRNA via its DRBM domain: RNA-binding activity is required to escape host ZBP1-dependent necroptosis. Mechanistically, the Z-binding domain binds Z-RNAs that are produced during vaccinia virus infection, thereby competing with Z-RNA detection by host ZBP1, suppressing ZBP1-dependent necroptosis. Acts as a key inhibitor of the interferon response by blocking the phosphorylation and subsequent activation of IRF3 and IRF7 kinases that are required for interferon-alpha gene expression. Inhibits NF-kappa-B activation and the ubiquitin-like protein ISG15, which is an early antiviral protein. The binding with host ISG15 subsequently blocks host ISGylation. The sequence is that of RNA-binding protein OPG065 (OPG065) from Vaccinia virus (strain Western Reserve) (VACV).